Reading from the N-terminus, the 2944-residue chain is Collagen alpha-1(VII) chain (2944 aa).

The first 24 residues, 1–24 (MRLRLLVAALCAAEILMGAPEVWA), serve as a signal peptide directing secretion. The interval 18 to 1254 (GAPEVWAQPR…TGPCAVHCPK (1237 aa)) is nonhelical region (NC1). One can recognise a VWFA 1 domain in the interval 39 to 212 (DIVFLLDGSS…SILRTLLPLI (174 aa)). 9 Fibronectin type-III domains span residues 235 to 330 (GPRD…TAKE), 331 to 417 (GLEL…TASS), 418 to 508 (VEQT…LEQL), 511 to 598 (PVMN…DPEA), 601 to 688 (VVPG…DPLG), 689 to 776 (PVRR…APEP), 779 to 867 (SVSK…PPAT), 870 to 957 (LLET…EPSH), and 959 to 1053 (PSTE…SHGP). Asn-338 carries an N-linked (GlcNAc...) asparagine glycan. Asn-787 carries an N-linked (GlcNAc...) asparagine glycan. Residues 1055–1230 (DVVFLLHATR…PGLDRAVSDL (176 aa)) enclose the VWFA 2 domain. Residue Asn-1110 is glycosylated (N-linked (GlcNAc...) asparagine). A Cell attachment site motif is present at residues 1171 to 1173 (RGD). Positions 1255–1475 (GQKGEPGVTG…GLRGAPGMTG (221 aa)) are interrupted collagenous region. The triple-helical region stretch occupies residues 1255 to 2775 (GQKGEPGVTG…GPRGEKGEAA (1521 aa)). Disordered regions lie at residues 1259–1934 (EPGV…GSLP) and 1960–2773 (SSGS…EKGE). The span at 1338–1352 (RGPQGPKGEPGEPGQ) shows a compositional bias: low complexity. A compositionally biased stretch (gly residues) spans 1353 to 1363 (ITGGGGPGFPG). Basic and acidic residues-rich tracts occupy residues 1397–1406 (KGDKGDRGER) and 1439–1448 (PGEKGEKGDC). Residues 1507 to 1518 (PGAAGHPGVEGP) are compositionally biased toward low complexity. Composition is skewed to basic and acidic residues over residues 1527-1536 (RRGEKGEPGR), 1627-1639 (RGRDGEAGEKGDE), and 1666-1680 (VGEKGDQGDPGEDGR). Residues 1813 to 1822 (PPGPPGPPGV) are compositionally biased toward pro residues. Basic and acidic residues-rich tracts occupy residues 1846–1855 (EDGRKGEKGD), 1862–1871 (EGPDGPKGER), and 1968–1984 (PERRPGPKGDPGDRGPP). Residues 2002-2004 (RGD) carry the Cell attachment site motif. Over residues 2040 to 2049 (GRAGGSGEAG) the composition is skewed to gly residues. Basic and acidic residues predominate over residues 2050-2068 (RPGERGERGEKGERGDQGR). The Cell attachment site motif lies at 2063 to 2065 (RGD). The span at 2074–2083 (LPGPPGPPGP) shows a compositional bias: pro residues. Residues 2130–2140 (DVGEPGKRGHD) show a composition bias toward basic and acidic residues. Residues Pro-2158, Pro-2167, Pro-2176, and Pro-2179 each carry the 4-hydroxyproline modification. Low complexity-rich tracts occupy residues 2182 to 2197 (PGLAGPAGPQGPSGLK), 2226 to 2241 (SGLVGPQGSPGLPGQV), 2279 to 2299 (PKGEPGPVGAPGQVVVGPPGA), and 2306 to 2317 (PGDLAGALLGEP). Positions 2319–2335 (AKGDRGLPGPRGEKGEA) are enriched in basic and acidic residues. A compositionally biased stretch (low complexity) spans 2414–2427 (ERGLAGPPGREGAP). Basic and acidic residues-rich tracts occupy residues 2462–2477 (RGERGEPGVRGEDGHP) and 2525–2544 (AKGDMGERGPRGIDGDKGPR). Residues 2576–2594 (PKGEPGAAGIPGEPGAPGK) are compositionally biased toward low complexity. Positions 2601 to 2603 (RGD) match the Cell attachment site motif. Positions 2615–2636 (LKGEKGIKGTCGRDGERGDKGE) are enriched in basic and acidic residues. 5-hydroxylysine is present on residues Lys-2616 and Lys-2622. The Cell attachment site motif lies at 2631-2633 (RGD). 4-hydroxyproline is present on residues Pro-2655, Pro-2658, and Pro-2664. A compositionally biased stretch (gly residues) spans 2695–2704 (GPPGVGGFPG). The tract at residues 2776-2944 (LTEDDIRDFV…GVHSQKTGAA (169 aa)) is nonhelical region (NC2). The BPTI/Kunitz inhibitor domain maps to 2879-2931 (CSLPLDEGSCTAYTLRWYHRAVPGGTACHPFVYGGCGGNANRFGTREACERRC). Cystine bridges form between Cys-2879–Cys-2931, Cys-2888–Cys-2914, and Cys-2906–Cys-2927.

In terms of assembly, homotrimer. Interacts with MIA3/TANGO1; facilitating its loading into transport carriers and subsequent secretion. In terms of processing, prolines at the third position of the tripeptide repeating unit (G-X-Y) are hydroxylated in some or all of the chains.

Its subcellular location is the secreted. The protein localises to the extracellular space. It localises to the extracellular matrix. It is found in the basement membrane. Its function is as follows. Stratified squamous epithelial basement membrane protein that forms anchoring fibrils which may contribute to epithelial basement membrane organization and adherence by interacting with extracellular matrix (ECM) proteins such as type IV collagen. The chain is Collagen alpha-1(VII) chain from Mus musculus (Mouse).